The primary structure comprises 60 residues: UPF0181 protein PMI1604 (60 aa).

It belongs to the UPF0181 family.

This is UPF0181 protein PMI1604 from Proteus mirabilis (strain HI4320).